A 68-amino-acid chain; its full sequence is Small ribosomal subunit protein bS21 (68 aa).

Residues 37–49 are compositionally biased toward basic and acidic residues; that stretch reads EKPSEKRAREKAA. Positions 37 to 68 are disordered; the sequence is EKPSEKRAREKAAAVRRARKMERKRMERDGIK. Over residues 50 to 59 the composition is skewed to basic residues; it reads AVRRARKMER.

This sequence belongs to the bacterial ribosomal protein bS21 family.

The polypeptide is Small ribosomal subunit protein bS21 (Erythrobacter litoralis (strain HTCC2594)).